The primary structure comprises 127 residues: Large ribosomal subunit protein uL22 (127 aa).

Belongs to the universal ribosomal protein uL22 family. In terms of assembly, part of the 50S ribosomal subunit.

In terms of biological role, this protein binds specifically to 23S rRNA; its binding is stimulated by other ribosomal proteins, e.g. L4, L17, and L20. It is important during the early stages of 50S assembly. It makes multiple contacts with different domains of the 23S rRNA in the assembled 50S subunit and ribosome. The globular domain of the protein is located near the polypeptide exit tunnel on the outside of the subunit, while an extended beta-hairpin is found that lines the wall of the exit tunnel in the center of the 70S ribosome. This is Large ribosomal subunit protein uL22 from Methylobacterium nodulans (strain LMG 21967 / CNCM I-2342 / ORS 2060).